The following is a 454-amino-acid chain: Protein translocase subunit SecY (454 aa).

Helical transmembrane passes span 43 to 63, 97 to 117, 144 to 164, 168 to 188, 201 to 221, 226 to 246, 289 to 309, 334 to 354, 390 to 410, and 414 to 434; these read LTIA…LPYI, FTLG…AFVI, TLLL…AFIF, ILKL…ILWI, SSFL…GMSF, IFSF…WAAI, PVVF…YILL, IVEA…IIDP, LIGA…GFVF, and IFKG…TEIL.

Belongs to the SecY/SEC61-alpha family. As to quaternary structure, component of the plastid Sec protein translocase complex, which is composed of at least SecY and SecE.

It is found in the plastid. The protein localises to the chloroplast thylakoid membrane. Functionally, the central subunit of the protein translocation channel SecYE. Consists of two halves formed by TMs 1-5 and 6-10. These two domains form a lateral gate at the front which open onto the bilayer between TMs 2 and 7, and are clamped together by SecE at the back. The channel is closed by both a pore ring composed of hydrophobic SecY resides and a short helix (helix 2A) on the extracellular side of the membrane which forms a plug. The polypeptide is Protein translocase subunit SecY (Heterosigma akashiwo (strain NIES-293 / 8280G21-1)).